Here is a 178-residue protein sequence, read N- to C-terminus: Caveolin-1 (178 aa).

The residue at position 2 (S2) is an N-acetylserine. S2 is subject to Phosphoserine. The interval 2 to 94 (SGGKYVDSEG…WKASFTTFTV (93 aa)) is required for homooligomerization. At 2 to 104 (SGGKYVDSEG…TKYWFYRLLS (103 aa)) the chain is on the cytoplasmic side. Residue K5 is modified to N6-acetyllysine; alternate. K5 participates in a covalent cross-link: Glycyl lysine isopeptide (Lys-Gly) (interchain with G-Cter in ubiquitin); alternate. Y6 bears the Phosphotyrosine mark. Position 9 is a phosphoserine (S9). Phosphotyrosine; by ABL1 is present on Y14. Residue Y25 is modified to Phosphotyrosine. Glycyl lysine isopeptide (Lys-Gly) (interchain with G-Cter in ubiquitin) cross-links involve residues K26, K39, K47, and K57. The tract at residues 82 to 94 (DGIWKASFTTFTV) is interaction with CAVIN3. An intramembrane region (helical) is located at residues 105 to 125 (ALFGIPMALIWGIYFAILSFL). The Cytoplasmic portion of the chain corresponds to 126–178 (HIWAVVPCIKSFLIEIQCISRVYSIYVHTFCDPLFEAIGKIFSSIRINMQKEI). Residues 131 to 142 (VPCIKSFLIEIQ) are interacts with SPRY1, SPRY2, SPRY3 and SPRY4. Residues C133, C143, and C156 are each lipidated (S-palmitoyl cysteine). The tract at residues 149 to 160 (SIYVHTFCDPLF) is interacts with SPRY1, SPRY2, and SPRY4. Residues 167 to 178 (FSSIRINMQKEI) form an interacts with SPRY1, SPRY2, SPRY3 and SPRY4 region.

It belongs to the caveolin family. As to quaternary structure, homooligomer. Interacts with GLIPR2. Interacts with NOSTRIN. Interacts with SNAP25 and STX1A. Interacts (via the N-terminus) with DPP4; the interaction is direct. Interacts with CTNNB1, CDH1 and JUP. Interacts with PACSIN2; this interaction induces membrane tubulation. Interacts with SLC7A9. Interacts with BMX and BTK. Interacts with TGFBR1. Interacts with CAVIN3 (via leucine-zipper domain) in a cholesterol-sensitive manner. Interacts with CAVIN1. Interacts with EHD2 in a cholesterol-dependent manner. Forms a ternary complex with UBXN6 and VCP; mediates CAV1 targeting to lysosomes for degradation. Interacts with ABCG1; this interaction regulates ABCG1-mediated cholesterol efflux. Interacts with NEU3; this interaction enhances NEU3 sialidase activity within caveola. Interacts (via C-terminus) with SPRY1, SPRY2 (via C-terminus), SPRY3, and SPRY4. Interacts with IGFBP5; this interaction allows trafficking of IGFBP5 from the plasma membrane to the nucleus. Phosphorylated at Tyr-14 by ABL1 in response to oxidative stress. In terms of processing, ubiquitinated. Undergo monoubiquitination and multi- and/or polyubiquitination. Monoubiquitination of N-terminal lysines promotes integration in a ternary complex with UBXN6 and VCP which promotes oligomeric CAV1 targeting to lysosomes for degradation. Ubiquitinated by ZNRF1; leading to degradation and modulation of the TLR4-mediated immune response.

The protein resides in the golgi apparatus membrane. The protein localises to the cell membrane. It localises to the membrane. Its subcellular location is the caveola. It is found in the membrane raft. Its function is as follows. May act as a scaffolding protein within caveolar membranes. Forms a stable heterooligomeric complex with CAV2 that targets to lipid rafts and drives caveolae formation. Mediates the recruitment of CAVIN proteins (CAVIN1/2/3/4) to the caveolae. Interacts directly with G-protein alpha subunits and can functionally regulate their activity. Involved in the costimulatory signal essential for T-cell receptor (TCR)-mediated T-cell activation. Its binding to DPP4 induces T-cell proliferation and NF-kappa-B activation in a T-cell receptor/CD3-dependent manner. Recruits CTNNB1 to caveolar membranes and may regulate CTNNB1-mediated signaling through the Wnt pathway. Negatively regulates TGFB1-mediated activation of SMAD2/3 by mediating the internalization of TGFBR1 from membrane rafts leading to its subsequent degradation. Binds 20(S)-hydroxycholesterol (20(S)-OHC). In Loxodonta africana (African elephant), this protein is Caveolin-1 (CAV1).